The sequence spans 221 residues: Probable molybdenum cofactor guanylyltransferase (221 aa).

GTP is bound by residues 17-19 (LAG), Lys-29, Asp-74, and Asp-103. Asp-103 contributes to the Mg(2+) binding site.

The protein belongs to the MobA family. The cofactor is Mg(2+).

Its subcellular location is the cytoplasm. It catalyses the reaction Mo-molybdopterin + GTP + H(+) = Mo-molybdopterin guanine dinucleotide + diphosphate. Its function is as follows. Transfers a GMP moiety from GTP to Mo-molybdopterin (Mo-MPT) cofactor (Moco or molybdenum cofactor) to form Mo-molybdopterin guanine dinucleotide (Mo-MGD) cofactor. The polypeptide is Probable molybdenum cofactor guanylyltransferase (Peptoclostridium acidaminophilum (Eubacterium acidaminophilum)).